The primary structure comprises 28 residues: Chassatide C12 (28 aa).

Positions 1–28 form a cross-link, cyclopeptide (Glu-Asn); the sequence is EYCGESCYLIPCFTPGCYCVSRQCVNKN. 3 disulfide bridges follow: cysteine 3–cysteine 17, cysteine 7–cysteine 19, and cysteine 12–cysteine 24.

In terms of processing, this is a cyclic peptide. As to expression, expressed in fruit, pedicel, leaf and stem but not in root (at protein level).

Functionally, probably participates in a plant defense mechanism. The protein is Chassatide C12 of Chassalia chartacea (Chassalia curviflora).